Consider the following 210-residue polypeptide: Redox-sensing transcriptional repressor Rex (210 aa).

A DNA-binding region (H-T-H motif) is located at residues 17–56; the sequence is KYHRYLGNLMRNDVDRISSKELSEKIGFTASQIRQDLNCF. An NAD(+)-binding site is contributed by 91–96; the sequence is GAGNIG.

The protein belongs to the transcriptional regulatory Rex family. Homodimer.

It localises to the cytoplasm. Functionally, modulates transcription in response to changes in cellular NADH/NAD(+) redox state. This Clostridium kluyveri (strain ATCC 8527 / DSM 555 / NBRC 12016 / NCIMB 10680 / K1) protein is Redox-sensing transcriptional repressor Rex.